We begin with the raw amino-acid sequence, 374 residues long: RNA polymerase sigma factor SigA (374 aa).

Positions Leu141 to Thr211 are sigma-70 factor domain-2. An Interaction with polymerase core subunit RpoC motif is present at residues Asp165–Gln168. Residues Glu220–His296 form a sigma-70 factor domain-3 region. The interval Val309 to His362 is sigma-70 factor domain-4. Positions Leu335–Ala354 form a DNA-binding region, H-T-H motif.

This sequence belongs to the sigma-70 factor family. RpoD/SigA subfamily. In terms of assembly, interacts transiently with the RNA polymerase catalytic core.

It is found in the cytoplasm. Functionally, sigma factors are initiation factors that promote the attachment of RNA polymerase to specific initiation sites and are then released. This sigma factor is the primary sigma factor during exponential growth. The polypeptide is RNA polymerase sigma factor SigA (Listeria innocua serovar 6a (strain ATCC BAA-680 / CLIP 11262)).